We begin with the raw amino-acid sequence, 122 residues long: Small ribosomal subunit protein uS13 (122 aa).

The disordered stretch occupies residues 98-122 (VRGQRTKTNARTRKGKRKTVGAKAK).

This sequence belongs to the universal ribosomal protein uS13 family. Part of the 30S ribosomal subunit. Forms a loose heterodimer with protein S19. Forms two bridges to the 50S subunit in the 70S ribosome.

Its function is as follows. Located at the top of the head of the 30S subunit, it contacts several helices of the 16S rRNA. In the 70S ribosome it contacts the 23S rRNA (bridge B1a) and protein L5 of the 50S subunit (bridge B1b), connecting the 2 subunits; these bridges are implicated in subunit movement. Contacts the tRNAs in the A and P-sites. In Nautilia profundicola (strain ATCC BAA-1463 / DSM 18972 / AmH), this protein is Small ribosomal subunit protein uS13.